The chain runs to 813 residues: Hyaluronate lyase HylB (813 aa).

Residues 1 to 32 (MFGTPSRRTFLTASALSAMALAASPTVTDAIA) constitute a signal peptide (tat-type signal). Catalysis depends on residues Asn222, His272, and Tyr281.

The protein belongs to the polysaccharide lyase 8 family. Post-translationally, predicted to be exported by the Tat system. The position of the signal peptide cleavage has not been experimentally proven.

It is found in the secreted. It carries out the reaction [hyaluronan](n) = n 3-(4-deoxy-beta-D-gluc-4-enuronosyl)-N-acetyl-D-glucosamine + H2O. In terms of biological role, degrades hyaluronic acid (HA) exclusively into HA disaccharides (HA-2). Produced HA-2s confer anti-inflammatory properties leading to reduced immunopathology in the mouse model of acne. This chain is Hyaluronate lyase HylB, found in Cutibacterium acnes (strain DSM 16379 / KPA171202) (Propionibacterium acnes).